Consider the following 201-residue polypeptide: ATP-dependent Clp protease proteolytic subunit (201 aa).

The active-site Nucleophile is the Ser-98. The active site involves His-123.

The protein belongs to the peptidase S14 family. As to quaternary structure, fourteen ClpP subunits assemble into 2 heptameric rings which stack back to back to give a disk-like structure with a central cavity, resembling the structure of eukaryotic proteasomes.

It localises to the cytoplasm. It carries out the reaction Hydrolysis of proteins to small peptides in the presence of ATP and magnesium. alpha-casein is the usual test substrate. In the absence of ATP, only oligopeptides shorter than five residues are hydrolyzed (such as succinyl-Leu-Tyr-|-NHMec, and Leu-Tyr-Leu-|-Tyr-Trp, in which cleavage of the -Tyr-|-Leu- and -Tyr-|-Trp bonds also occurs).. Cleaves peptides in various proteins in a process that requires ATP hydrolysis. Has a chymotrypsin-like activity. Plays a major role in the degradation of misfolded proteins. The polypeptide is ATP-dependent Clp protease proteolytic subunit (Rickettsia conorii (strain ATCC VR-613 / Malish 7)).